Reading from the N-terminus, the 121-residue chain is Small ribosomal subunit protein uS13 (121 aa).

A disordered region spans residues 91-121 (HRKGLPMRGQRTRTNARTRKGPRKAGVALKK).

Belongs to the universal ribosomal protein uS13 family. Part of the 30S ribosomal subunit. Forms a loose heterodimer with protein S19. Forms two bridges to the 50S subunit in the 70S ribosome.

Located at the top of the head of the 30S subunit, it contacts several helices of the 16S rRNA. In the 70S ribosome it contacts the 23S rRNA (bridge B1a) and protein L5 of the 50S subunit (bridge B1b), connecting the 2 subunits; these bridges are implicated in subunit movement. Contacts the tRNAs in the A and P-sites. This chain is Small ribosomal subunit protein uS13, found in Cupriavidus taiwanensis (strain DSM 17343 / BCRC 17206 / CCUG 44338 / CIP 107171 / LMG 19424 / R1) (Ralstonia taiwanensis (strain LMG 19424)).